We begin with the raw amino-acid sequence, 412 residues long: Glutamate-pyruvate aminotransferase AlaC (412 aa).

N6-(pyridoxal phosphate)lysine is present on Lys244.

It belongs to the class-I pyridoxal-phosphate-dependent aminotransferase family. In terms of assembly, homodimer. Pyridoxal 5'-phosphate is required as a cofactor.

The protein resides in the cytoplasm. It carries out the reaction L-alanine + 2-oxoglutarate = pyruvate + L-glutamate. It functions in the pathway amino-acid biosynthesis; L-alanine biosynthesis. Involved in the biosynthesis of alanine. Catalyzes the transamination of pyruvate by glutamate, leading to the formation of L-alanine and 2-oxoglutarate. Is also able to catalyze the reverse reaction. This chain is Glutamate-pyruvate aminotransferase AlaC, found in Escherichia coli (strain K12).